A 2563-amino-acid chain; its full sequence is Compactin diketide synthase mlcB (2563 aa).

The 422-residue stretch at 29–450 (STPIAIVGMG…GSNAHVILES (422 aa)) folds into the Ketosynthase family 3 (KS3) domain. Catalysis depends on for beta-ketoacyl synthase activity residues Cys202, His337, and His372. An acyl and malonyl transferase region spans residues 568–915 (VFTGQGAQWH…TELISKGYGL (348 aa)). The For malonyltransferase activity role is filled by Ser658. A compositionally biased stretch (basic and acidic residues) spans 951–960 (EPRGSRESKQ). The tract at residues 951–971 (EPRGSRESKQRTHPPHTLIGS) is disordered. The N-terminal hotdog fold stretch occupies residues 966 to 1103 (HTLIGSRESL…GLIRSESERS (138 aa)). A PKS/mFAS DH domain is found at 966 to 1284 (HTLIGSRESL…FQSVGSSFSD (319 aa)). Catalysis depends on His998, which acts as the Proton acceptor; for dehydratase activity. The segment at 998 to 1010 (HVVGSSIIFPGAG) is dehydratase-like. The segment at 1121-1284 (DNRSIDPNDL…FQSVGSSFSD (164 aa)) is C-terminal hotdog fold. Asp1187 acts as the Proton donor; for dehydratase activity in catalysis. The methyltransferase stretch occupies residues 1542–1579 (YDVVVACQVLHATRCMKRTLSNVRKLLKPGGNLILVET). Residues 2485 to 2562 (EAISIVLKAM…GLVELVVAKC (78 aa)) enclose the Carrier domain. Position 2522 is an O-(pantetheine 4'-phosphoryl)serine (Ser2522).

The cofactor is pantetheine 4'-phosphate.

It catalyses the reaction holo-[2-methylbutanoate polyketide synthase] + 2 malonyl-CoA + S-adenosyl-L-methionine + 2 NADPH + 3 H(+) = (S)-2-methylbutanoyl-[2-methylbutanoate polyketide synthase] + S-adenosyl-L-homocysteine + 2 CO2 + 2 NADP(+) + 2 CoA + H2O. It participates in polyketide biosynthesis. Functionally, diketide synthase; part of the gene cluster that mediates the biosynthesis of compactin, also known as mevastatin or ML-236B, and which acts as a potent competitive inhibitor of HMG-CoA reductase. Compactin biosynthesis is performed in two stages. The first stage is catalyzed by the nonaketide synthase mlcA, which belongs to type I polyketide synthases and catalyzes the iterative nine-step formation of the polyketide. This PKS stage is completed by the action of dehydrogenase mlcG, which catalyzes the NADPH-dependent reduction of the unsaturated tetra-, penta- and heptaketide intermediates that arise during the mlcA-mediated biosynthesis of the nonaketide chain and leads to dihydro-ML-236C carboxylate. Covalently bound dihydro-ML-236C carboxylate is released from mlcA by the mlcF esterase. Conversion of dihydro-ML-236C carboxylate into ML-236A carboxylate is subsequently performed with the participation of molecular oxygen and P450 monoogygenase mlcC. Finally, mlcH performs the conversion of ML-236A carboxylate to ML-236B/compactin carboxylate through the addition of the side-chain diketide moiety produced by the diketide synthase mlcB. In Penicillium citrinum, this protein is Compactin diketide synthase mlcB (mlcB).